We begin with the raw amino-acid sequence, 588 residues long: NADP-dependent malic enzyme 2 (588 aa).

The tract at residues 1–21 (MGSTPTDLPGEDVADNRSGVG) is disordered. Residue G2 is modified to N-acetylglycine. Y136 (proton donor) is an active-site residue. R189 lines the NADP(+) pocket. K207 serves as the catalytic Proton acceptor. Residues E279, D280, and D303 each contribute to the a divalent metal cation site. Residues D303, 332 to 348 (LFLGAGEAGTGIAELIA), and N444 each bind NADP(+).

Belongs to the malic enzymes family. In terms of assembly, homohexamers and homooctamers. Mg(2+) is required as a cofactor. The cofactor is Mn(2+). In terms of tissue distribution, expressed in leaves, stems, flowers and roots. Particularly present in vasculatures, trichome basal cells and hydatodes.

The protein localises to the cytoplasm. The catalysed reaction is (S)-malate + NADP(+) = pyruvate + CO2 + NADPH. The enzyme catalyses oxaloacetate + H(+) = pyruvate + CO2. With respect to regulation, activated by coenzyme A (CoA), aspartate, succinate and fumarate. Repressed by oxaloacetate, glucose and ATP. The protein is NADP-dependent malic enzyme 2 (NADP-ME2) of Arabidopsis thaliana (Mouse-ear cress).